The following is a 2052-amino-acid chain: Genome polyprotein (2052 aa).

2 short sequence motifs ((L)YPX(n)L motif) span residues 167-171 (YPHGL) and 200-205 (YPVWEL). The tract at residues 502–522 (TVSTEQNVPDPQVGIKGKANR) is disordered. The interval 760–830 (MMSRIAAGDL…PRKMKGLFSQ (71 aa)) is involved in P1-2A pentamerization. A helical membrane pass occupies residues 1005 to 1025 (TVEIINIVLCFIKSGILLYVI). Positions 1037-1064 (IGLLRVMNYADIGCSVISCGKVFSKMLE) are membrane-penetrating ability. A coiled-coil region spans residues 1121-1146 (KKKDVLNILKDNQQKIEKAIEEADNF). The helical transmembrane segment at 1296-1316 (WVAVGAAVGILGLLVGGWFVY) threads the bilayer. The residue at position 1333 (Tyr1333) is an O-(5'-phospho-RNA)-tyrosine. A Peptidase C3 domain is found at 1348 to 1562 (DPVESQSTLE…VAKLITQEMF (215 aa)). Residues His1397, Asp1437, and Cys1525 each act as for protease 3C activity in the active site. The RdRp catalytic domain maps to 1810–1931 (DVGLDLDFSA…VFSRDVQIDN (122 aa)).

It belongs to the picornaviridae polyprotein family. Homodimer. Homomultimer; probably interacts with membranes in a multimeric form. Seems to assemble into amyloid-like fibers. As to quaternary structure, homodimer. Monomer. Interacts with protein 3CD. In terms of assembly, interacts with host ACBD3. Interacts with protein 3AB. As to quaternary structure, interacts with human MAVS. In terms of assembly, homodimer; disulfide-linked. Homopentamer. Homooligomer. As to quaternary structure, interacts with capsid protein VP2. Interacts with capsid protein VP3. In terms of assembly, interacts with capsid protein VP1. Interacts with capsid protein VP3. Interacts with capsid protein VP1. Interacts with capsid protein VP2. In terms of processing, specific enzymatic cleavages by viral protease in vivo yield a variety of precursors and mature proteins. Polyprotein processing intermediates are produced, such as P1-2A which is a functional precursor of the structural proteins, VP0 which is a VP4-VP2 precursor, VP1-2A precursor, 3ABC precursor which is a stable and catalytically active precursor of 3A, 3B and 3C proteins, 3AB and 3CD precursors. The assembly signal 2A is removed from VP1-2A by a host protease, possibly host Cathepsin L. This cleavage occurs over a region of 3 amino-acids probably generating VP1 proteins with heterogeneous C-termini. Post-translationally, during virion maturation, immature virions are rendered infectious following cleavage of VP0 into VP4 and VP2. This maturation seems to be an autocatalytic event triggered by the presence of RNA in the capsid and is followed by a conformational change of the particle. The assembly signal 2A is removed from VP1-2A by a host protease, possibly host Cathepsin L in naked virions. This cleavage does not occur in enveloped virions. This cleavage occurs over a region of 3 amino-acids probably generating VP1 proteins with heterogeneous C-termini. In terms of processing, VPg is uridylylated prior to priming replication into VPg-pUpU. Post-translationally, unlike other picornaviruses, does not seem to be myristoylated.

The protein resides in the virion. The protein localises to the host endosome. It is found in the host multivesicular body. Its subcellular location is the host membrane. It localises to the host mitochondrion outer membrane. The protein resides in the host cytoplasm. The protein localises to the host cytoplasmic vesicle membrane. The catalysed reaction is RNA(n) + a ribonucleoside 5'-triphosphate = RNA(n+1) + diphosphate. The enzyme catalyses a ribonucleoside 5'-triphosphate + H2O = a ribonucleoside 5'-diphosphate + phosphate + H(+). It carries out the reaction Selective cleavage of Gln-|-Gly bond in the poliovirus polyprotein. In other picornavirus reactions Glu may be substituted for Gln, and Ser or Thr for Gly.. In terms of biological role, capsid proteins VP1, VP2, and VP3 form a closed capsid enclosing the viral positive strand RNA genome. All these proteins contain a beta-sheet structure called beta-barrel jelly roll. Together they form an icosahedral capsid (T=3) composed of 60 copies of each VP1, VP2, and VP3, with a diameter of approximately 300 Angstroms. VP1 is situated at the 12 fivefold axes, whereas VP2 and VP3 are located at the quasi-sixfold axes. The naked capsid interacts with the host receptor HAVCR1 to provide virion attachment to and probably entry into the target cell. Its function is as follows. VP0 precursor is a component of the immature procapsids. Plays a role in the assembly of the 12 pentamers into an icosahedral structure. Has not been detected in mature virions, supposedly owing to its small size. Functionally, precursor component of immature procapsids that corresponds to an extended form of the structural protein VP1. After maturation, possibly by the host Cathepsin L, the assembly signal 2A is cleaved to give rise to the mature VP1 protein. In terms of biological role, functions as a viroporin. Affects membrane integrity and causes an increase in membrane permeability. Involved in host intracellular membrane rearrangements probably to give rise to the viral factories. Does not disrupt calcium homeostasis or glycoprotein trafficking. Antagonizes the innate immune response of the host by suppressing IFN-beta synthesis, which it achieves by interfering with the RIG-I/IFIH1 pathway. Its function is as follows. Affects membrane integrity and causes an increase in membrane permeability. Associates with and induces structural rearrangements of intracellular membranes. Displays RNA-binding activity. Functionally, the precursor 3ABC is targeted to the mitochondrial membrane where protease 3C activity cleaves and inhibits the host antiviral protein MAVS, thereby disrupting activation of IRF3 through the IFIH1/MDA5 pathway. In vivo, the protease activity of 3ABC precursor is more efficient in cleaving the 2BC precursor than that of protein 3C. The 3ABC precursor may therefore play a role in the proteolytic processing of the polyprotein. Possible viroporin. In terms of biological role, interacts with the 3CD precursor and with RNA structures found at both the 5'- and 3'-termini of the viral genome. Since the 3AB precursor contains the hydrophobic domain 3A, it probably anchors the whole viral replicase complex to intracellular membranes on which viral RNA synthesis occurs. Its function is as follows. May serve as membrane anchor to the 3AB and 3ABC precursors via its hydrophobic domain. May interact with RNA. Acts as a primer for viral RNA replication and remains covalently bound to viral genomic RNA. VPg is uridylylated prior to priming replication into VPg-pUpU. The VPg-pUpU is then used as primer on the genomic RNA poly(A) by the RNA-dependent RNA polymerase to replicate the viral genome. Functionally, cysteine protease that generates mature viral proteins from the precursor polyprotein. In addition to its proteolytic activity, it binds to viral RNA, and thus influences viral genome replication. RNA and substrate bind cooperatively to the protease. Cleaves IKBKG/NEMO to impair innate immune signaling. Cleaves host PABPC1 which may participate in the switch of viral translation to RNA synthesis. In terms of biological role, interacts with the 3AB precursor and with RNA structures found at both the 5'- and 3'-termini of the viral genome. Disrupts TLR3 signaling by degrading the host adapter protein TICAM1/TRIF. Its function is as follows. RNA-directed RNA polymerase 3D-POL replicates genomic and antigenomic RNA by recognizing replications specific signals. The polypeptide is Genome polyprotein (Homo sapiens (Human)).